Consider the following 566-residue polypeptide: Protein pacG (566 aa).

The segment at residues 79 to 326 (TSFDPPPPAE…RSPRNFQSRK (248 aa)) is a DNA-binding region (NDT80). Disordered stretches follow at residues 314-422 (VRGR…EAHR) and 448-470 (DSRP…DSGR). Residues 333-349 (SAAASRKNAQAAAASNN) are compositionally biased toward low complexity. 3 stretches are compositionally biased toward polar residues: residues 365–391 (VKSS…ATNS), 403–413 (HSSVYSQSSPE), and 452–466 (HTSF…SLSV).

The protein resides in the nucleus. It localises to the cytoplasm. Its function is as follows. Transcription factor that acts as a positive regulator of nonrepressible acid phosphatase activity. Is a major regulator of responses to nitrogen and carbon starvation and is essential for the expression of genes involved in vegetative incompatibility (like pin-c, het-6, and tol). Vegetative incompatibility is a non-self-recognition system ubiquitous in filamentous fungi which results in programmed cell death. The sequence is that of Protein pacG (pacG) from Emericella nidulans (strain FGSC A4 / ATCC 38163 / CBS 112.46 / NRRL 194 / M139) (Aspergillus nidulans).